The sequence spans 218 residues: Hypoxanthine-guanine phosphoribosyltransferase (218 aa).

GMP is bound by residues Lys-69, 134-142, Lys-166, 186-188, and Asp-194; these read EDIIDTGKT and KFV. Asp-138 (proton acceptor) is an active-site residue. Position 194 (Asp-194) interacts with Mg(2+).

Belongs to the purine/pyrimidine phosphoribosyltransferase family. Homotetramer. Mg(2+) is required as a cofactor.

The protein localises to the cytoplasm. It catalyses the reaction IMP + diphosphate = hypoxanthine + 5-phospho-alpha-D-ribose 1-diphosphate. It carries out the reaction GMP + diphosphate = guanine + 5-phospho-alpha-D-ribose 1-diphosphate. It participates in purine metabolism; IMP biosynthesis via salvage pathway; IMP from hypoxanthine: step 1/1. In terms of biological role, converts guanine to guanosine monophosphate, and hypoxanthine to inosine monophosphate. Transfers the 5-phosphoribosyl group from 5-phosphoribosylpyrophosphate onto the purine. Plays a central role in the generation of purine nucleotides through the purine salvage pathway. This Gallus gallus (Chicken) protein is Hypoxanthine-guanine phosphoribosyltransferase (HPRT1).